The primary structure comprises 607 residues: Guanine nucleotide-binding protein-like 1 (607 aa).

Over residues 1 to 14 (MPRKKPFSVKQKKK) the composition is skewed to basic residues. Positions 1-81 (MPRKKPFSVK…GPRGYDPNRY (81 aa)) are disordered. Over residues 15–26 (QLQDKRERKRGL) the composition is skewed to basic and acidic residues. Phosphoserine occurs at positions 32, 33, and 34. Residues threonine 48 and threonine 50 each carry the phosphothreonine modification. Phosphoserine is present on residues serine 51 and serine 68. The 241-residue stretch at 178–418 (WRQLWRVLEM…LCDCPGLIFP (241 aa)) folds into the CP-type G domain. 225-228 (NKVD) is a GTP binding site. The residue at position 324 (serine 324) is a Phosphoserine. GTP is bound by residues 367–374 (GFPNVGKS) and 411–415 (DCPGL). The segment at 547 to 607 (GPAGDEEEEE…PYALLGEDEC (61 aa)) is disordered. Over residues 550-584 (GDEEEEEEEELSSSCEEEGEEDRDADEEGEGDEET) the composition is skewed to acidic residues. Serine 561, serine 562, and serine 563 each carry phosphoserine.

Belongs to the TRAFAC class YlqF/YawG GTPase family.

Functionally, possible regulatory or functional link with the histocompatibility cluster. This Pan troglodytes (Chimpanzee) protein is Guanine nucleotide-binding protein-like 1 (GNL1).